The chain runs to 2108 residues: Kinesin-like protein KIF26B (2108 aa).

Disordered stretches follow at residues 1–124 (MNSV…PGSD) and 263–287 (KHGS…PTHQ). The segment covering 40–50 (WYRKAYEESRA) has biased composition (basic and acidic residues). Low complexity predominate over residues 58–98 (GAGSALGSSGTPSPGSGTSSPSSFTGSPGPASPGIGTSSPG). Positions 99–120 (SLGGSPGFGTGSPGSGSGGGSS) are enriched in gly residues. The Kinesin motor domain occupies 450-801 (KVKVMLRICS…IQIASRVLRM (352 aa)). 546 to 553 (GHAKLGKS) contacts ATP. Disordered stretches follow at residues 805 to 825 (KTKY…GRMR), 876 to 917 (SDKE…GKSE), 937 to 1166 (DGSE…ESKK), 1406 to 1504 (EPEA…PVTD), 1519 to 1653 (GLAT…SSSK), 1685 to 1799 (AESL…ASKL), and 1824 to 1974 (RAGP…WVDG). Residues 1004-1046 (SHSPVPAAAPAHSPSPASPRSVPGSSSQHSASPLVQSPSLQSS) are compositionally biased toward low complexity. Residues 1424 to 1461 (RESKENSAKKEMKFEDPWLKREEEVKKETAHPNEEGMM) are compositionally biased toward basic and acidic residues. A compositionally biased stretch (low complexity) spans 1491–1500 (SSSSGEVSAS). 2 stretches are compositionally biased toward polar residues: residues 1521 to 1537 (ATQS…SSSL) and 1611 to 1628 (RASP…SPLN). 2 stretches are compositionally biased toward low complexity: residues 1713–1730 (SAGT…AGQS) and 1751–1763 (STTK…TKSL). Residues 1781 to 1795 (PWSTQSLSRNRSSGL) show a composition bias toward polar residues. Low complexity predominate over residues 1824–1836 (RAGPEAEARGGAL). The residue at position 1855 (Thr-1855) is a Phosphothreonine. 2 stretches are compositionally biased toward polar residues: residues 1866–1875 (GHGSDNSSVL) and 1907–1925 (ATGS…SSSV). Residues 1930 to 1948 (RSLKTPKKRSNPGSQRRRL) are compositionally biased toward basic residues. A compositionally biased stretch (polar residues) spans 1954-1968 (LDTSSPVRKPPNSTG). At Ser-1958 the chain carries Phosphoserine.

The protein belongs to the TRAFAC class myosin-kinesin ATPase superfamily. Kinesin family. KIF26 subfamily. As to quaternary structure, interacts with MYH10. Phosphorylation at Thr-1855 and Ser-1958 by CDKs, mainly CDK2 and CDK5, enhances the interaction with NEDD4, polyubiquitination, and subsequent proteasomal degradation. Phosphorylation occurs upon loss of interaction with microtubules. In terms of processing, polyubiquitinated by NEDD4, resulting in proteasomal degradation.

The protein localises to the cytoplasm. It is found in the cytoskeleton. Its function is as follows. Essential for embryonic kidney development. Plays an important role in the compact adhesion between mesenchymal cells adjacent to the ureteric buds, possibly by interacting with MYH10. This could lead to the establishment of the basolateral integrity of the mesenchyme and the polarized expression of ITGA8, which maintains the GDNF expression required for further ureteric bud attraction. Although it seems to lack ATPase activity it is constitutively associated with microtubules. The chain is Kinesin-like protein KIF26B (KIF26B) from Homo sapiens (Human).